The chain runs to 325 residues: MAQMTMIQAITDALRTELKNDENVLVFGEDVGVNGGVFRATEGLQKEFGEDRVFDTPLAESGIGGLALGLGLNGFRPVMEIQFFGFVYEVMDSVSGQMARMRYRSGGRWTSPVTIRSPFGGGVHTPELHADSLEGLVAQQPGIKVVIPSTPYDAKGLLISAIRDNDPVVFLEHMKLYRSFRQEVPEEEYTIELGKADVKREGTDLSIITYGAMVHESLKAADELEKDGISAEVVDLRTVSPLDIDTIIASVEKTGRAIVVQEAQKQAGIAANVVAEINDRAILSLEAPVLRVAAPDTVFPFSQAESVWLPNHKDVLETARKVLEF.

Glu-60 provides a ligand contact to thiamine diphosphate.

Heterodimer of an alpha and a beta chain. It depends on thiamine diphosphate as a cofactor.

The protein localises to the cytoplasm. It localises to the secreted. The enzyme catalyses N(6)-[(R)-lipoyl]-L-lysyl-[protein] + pyruvate + H(+) = N(6)-[(R)-S(8)-acetyldihydrolipoyl]-L-lysyl-[protein] + CO2. With respect to regulation, activity of the E1 module is inhibited by the pyruvate dehydrogenase inhibitor PdhI. The pyruvate dehydrogenase complex catalyzes the overall conversion of pyruvate to acetyl-CoA and CO(2). It contains multiple copies of three enzymatic components: pyruvate dehydrogenase (E1), dihydrolipoamide acetyltransferase (E2) and lipoamide dehydrogenase (E3). In terms of biological role, the B.subtilis PDH complex also possesses branched-chain 2-oxoacid dehydrogenase (BCDH) activity. This chain is Pyruvate dehydrogenase E1 component subunit beta, found in Bacillus subtilis (strain 168).